A 170-amino-acid chain; its full sequence is Sec-independent protein translocase protein TatB (170 aa).

A helical transmembrane segment spans residues 1–21; that stretch reads MIDLGISKLALIGAVALIVIG.

The protein belongs to the TatB family. The Tat system comprises two distinct complexes: a TatABC complex, containing multiple copies of TatA, TatB and TatC subunits, and a separate TatA complex, containing only TatA subunits. Substrates initially bind to the TatABC complex, which probably triggers association of the separate TatA complex to form the active translocon.

It localises to the cell inner membrane. In terms of biological role, part of the twin-arginine translocation (Tat) system that transports large folded proteins containing a characteristic twin-arginine motif in their signal peptide across membranes. Together with TatC, TatB is part of a receptor directly interacting with Tat signal peptides. TatB may form an oligomeric binding site that transiently accommodates folded Tat precursor proteins before their translocation. This chain is Sec-independent protein translocase protein TatB, found in Cupriavidus necator (strain ATCC 17699 / DSM 428 / KCTC 22496 / NCIMB 10442 / H16 / Stanier 337) (Ralstonia eutropha).